A 275-amino-acid chain; its full sequence is Release factor glutamine methyltransferase (275 aa).

S-adenosyl-L-methionine contacts are provided by residues 117–121, aspartate 140, tryptophan 168, and asparagine 182; that span reads GTGSG. Residue 182–185 coordinates substrate; sequence NPPY.

It belongs to the protein N5-glutamine methyltransferase family. PrmC subfamily.

It carries out the reaction L-glutaminyl-[peptide chain release factor] + S-adenosyl-L-methionine = N(5)-methyl-L-glutaminyl-[peptide chain release factor] + S-adenosyl-L-homocysteine + H(+). In terms of biological role, methylates the class 1 translation termination release factors RF1/PrfA and RF2/PrfB on the glutamine residue of the universally conserved GGQ motif. The protein is Release factor glutamine methyltransferase of Buchnera aphidicola subsp. Schizaphis graminum (strain Sg).